Reading from the N-terminus, the 243-residue chain is L-fucose operon activator (243 aa).

An HTH deoR-type domain is found at 1 to 57 (MKAARQQAIVDLLLNHTSLTTEALSEQLKVSKETIRRDLNELQTQGKILRNHGRAKY). Positions 19–38 (LTTEALSEQLKVSKETIRRD) form a DNA-binding region, H-T-H motif.

Transcriptional activator of the fuc operon. In Escherichia coli (strain K12), this protein is L-fucose operon activator (fucR).